Reading from the N-terminus, the 156-residue chain is Endoribonuclease YbeY (156 aa).

Residues His122, His126, and His132 each contribute to the Zn(2+) site.

It belongs to the endoribonuclease YbeY family. Zn(2+) serves as cofactor.

It localises to the cytoplasm. In terms of biological role, single strand-specific metallo-endoribonuclease involved in late-stage 70S ribosome quality control and in maturation of the 3' terminus of the 16S rRNA. This is Endoribonuclease YbeY from Geobacillus sp. (strain WCH70).